Here is a 988-residue protein sequence, read N- to C-terminus: Transcription regulator srbA precursor (988 aa).

At 1-427 (MSTPGIGGDF…SSWHARAISH (427 aa)) the chain is on the cytoplasmic side. Disordered stretches follow at residues 53 to 85 (AFPE…SDAM) and 108 to 169 (GDLN…KKRA). The segment covering 125–136 (SLSVHSNSPLSS) has biased composition (low complexity). The interval 165-178 (SKKRAHNVIEKRYR) is basic motif. The region spanning 165-236 (SKKRAHNVIE…SKATEYIRHL (72 aa)) is the bHLH domain. Positions 179-236 (ANLNEKIAELRDSVPSLRASYKQANGNSGDDDDDGVTSASKLNKASILSKATEYIRHL) are helix-loop-helix motif. The stretch at 226–260 (LSKATEYIRHLEIRNKRLEEENTALKIRLRQLDKA) forms a coiled coil. Polar residues predominate over residues 267 to 291 (SAASVSSPSDCTVSTESGASSSPSV). Residues 267 to 313 (SAASVSSPSDCTVSTESGASSSPSVFSHAEDVPSDHSPTSSHPPEGL) are disordered. A compositionally biased stretch (low complexity) spans 301–310 (DHSPTSSHPP). Residues 428–447 (FLMLAILVVGSAFIVFVYLF) traverse the membrane as a helical segment. Topologically, residues 448-988 (NSDPRRQYSA…SDNLLLSDES (541 aa)) are lumenal. Over residues 866–881 (PPSPMSKASDMLSSSS) the composition is skewed to low complexity. Residues 866-900 (PPSPMSKASDMLSSSSDDGEDGASQRNNNIIPHPM) are disordered.

In terms of processing, in low oxygen or sterol conditions, undergoes proteolytic cleavage by rhomboid-type protease rbdB and is released as soluble transcription factor from the membrane.

The protein resides in the endoplasmic reticulum membrane. Its subcellular location is the nucleus. In terms of biological role, precursor of the transcription factor srbA, which is embedded in the endoplasmic reticulum membrane. Low oxygen or sterol conditions promote processing of this form, releasing the transcription factor form that translocates into the nucleus and activates transcription of genes required for adaptation to anaerobic growth. Transcription factor that regulates sterol biosynthesis and hyphal morphology. Plays a critical role in ergosterol biosynthesis, resistance to the azole class of antifungal drugs, and in maintenance of cell polarity. Directly binds erg11A/cyp51A upstream DNA sequence at tandem repeats, called TR34 and TR46, that produce duplicated binding sites. Also mediates regulation of iron acquisition in response to hypoxia and low iron conditions via activation of extra- and intracellular siderophore production. Positively regulates the expression of the other hypoxia adaptation key transcription factor srbB. Required for the azole-sensing and response to azole stress. Binds the high-affinity sites 5'-A-T-C-G/A-T/G-A/G-C/T-G/C-A-T-3' of target promoters. Required for virulence in murine models of invasive pulmonary aspergillosis (IPA). The sequence is that of Transcription regulator srbA precursor from Aspergillus fumigatus (strain ATCC MYA-4609 / CBS 101355 / FGSC A1100 / Af293) (Neosartorya fumigata).